The sequence spans 447 residues: MTRKYFGTDGVRGRVGDAPITPDFVMRLGHAAGKVLALGQKTSQGKPTVLIGKDTRISGYMLEAALEAGFTAAGVNVLLTGPLPTPGIAYLTRTLRLAAGVVISASHNPYYDNGIKFFSASGDKLPDDVESQIEAMVEEPMTCVHSDELGRARRIDDAAGRYIEFCKSTFPYEHDLHGLKIVVDCANGAAYHIAPHVFHELGAEVISIGNQPNGRNINAGYGATAPEKLIEAVKANGADLGLAFDGDADRLQVVDADGRLYNGDELLYLIVRDRQASGQRVEGAVGTLMTNMAVELALKRLGVSFVRAKVGDRYVLEELNRHHWQLGGEGSGHLLCLDRHTTGDGIVSALQVLAALRRSGKTLPQLLDGVSLFPQTLINVRVEKGFDWQNHAGLKAVRDRVEPELEGRGRVLIRASGTEPVVRVMVEAEQVETAERAAQELAAALRA.

Ser-106 functions as the Phosphoserine intermediate in the catalytic mechanism. The Mg(2+) site is built by Ser-106, Asp-245, Asp-247, and Asp-249. Ser-106 is modified (phosphoserine).

The protein belongs to the phosphohexose mutase family. Requires Mg(2+) as cofactor. Post-translationally, activated by phosphorylation.

The catalysed reaction is alpha-D-glucosamine 1-phosphate = D-glucosamine 6-phosphate. Its function is as follows. Catalyzes the conversion of glucosamine-6-phosphate to glucosamine-1-phosphate. In Cupriavidus metallidurans (strain ATCC 43123 / DSM 2839 / NBRC 102507 / CH34) (Ralstonia metallidurans), this protein is Phosphoglucosamine mutase.